Here is a 393-residue protein sequence, read N- to C-terminus: S-adenosylmethionine synthase (393 aa).

His-17 contributes to the ATP binding site. Mg(2+) is bound at residue Asp-19. Residue Glu-45 participates in K(+) binding. Residues Glu-58 and Gln-106 each contribute to the L-methionine site. Residues 106-116 (QSAHIAQGVDA) are flexible loop. ATP-binding positions include 171–173 (DAK), 237–238 (KF), Asp-246, 252–253 (RK), Ala-269, and Lys-273. Position 246 (Asp-246) interacts with L-methionine. Lys-277 contacts L-methionine.

It belongs to the AdoMet synthase family. In terms of assembly, homotetramer; dimer of dimers. It depends on Mg(2+) as a cofactor. The cofactor is K(+).

It localises to the cytoplasm. It catalyses the reaction L-methionine + ATP + H2O = S-adenosyl-L-methionine + phosphate + diphosphate. It participates in amino-acid biosynthesis; S-adenosyl-L-methionine biosynthesis; S-adenosyl-L-methionine from L-methionine: step 1/1. In terms of biological role, catalyzes the formation of S-adenosylmethionine (AdoMet) from methionine and ATP. The overall synthetic reaction is composed of two sequential steps, AdoMet formation and the subsequent tripolyphosphate hydrolysis which occurs prior to release of AdoMet from the enzyme. The protein is S-adenosylmethionine synthase of Ruegeria sp. (strain TM1040) (Silicibacter sp.).